A 135-amino-acid polypeptide reads, in one-letter code: Large ribosomal subunit protein uL16 (135 aa).

The protein belongs to the universal ribosomal protein uL16 family. In terms of assembly, part of the 50S ribosomal subunit.

In terms of biological role, binds 23S rRNA and is also seen to make contacts with the A and possibly P site tRNAs. This Desulforapulum autotrophicum (strain ATCC 43914 / DSM 3382 / VKM B-1955 / HRM2) (Desulfobacterium autotrophicum) protein is Large ribosomal subunit protein uL16.